The sequence spans 284 residues: Pseudouridine-5'-phosphate glycosidase (284 aa).

The active-site Proton donor is the E17. K77 and V97 together coordinate substrate. Residue D126 participates in Mn(2+) binding. 128–130 (SQD) provides a ligand contact to substrate. Catalysis depends on K147, which acts as the Nucleophile.

It belongs to the pseudouridine-5'-phosphate glycosidase family. In terms of assembly, homotrimer. It depends on Mn(2+) as a cofactor.

It carries out the reaction D-ribose 5-phosphate + uracil = psi-UMP + H2O. Its function is as follows. Catalyzes the reversible cleavage of pseudouridine 5'-phosphate (PsiMP) to ribose 5-phosphate and uracil. Functions biologically in the cleavage direction, as part of a pseudouridine degradation pathway. This is Pseudouridine-5'-phosphate glycosidase from Thermotoga petrophila (strain ATCC BAA-488 / DSM 13995 / JCM 10881 / RKU-1).